Here is a 589-residue protein sequence, read N- to C-terminus: Protein MICRORCHIDIA 3 (589 aa).

The segment at 1-33 (MAPESKNAGVSVVVNLDSDSDSDNDDGVGGRGA) is disordered. Residues 542-589 (MRCEEYVKKETELEQTVSNLAKELEETKSKCARLALLVDAKRREMQQV) adopt a coiled-coil conformation.

This sequence belongs to the MORC ATPase protein family. As to quaternary structure, homodimer and heterodimer. Component of an RNA-directed DNA methylation (RdDM) complex. Mg(2+) is required as a cofactor. Requires Mn(2+) as cofactor.

The protein resides in the nucleus. Its function is as follows. Exhibits ATPase activity. Binds DNA/RNA in a non-specific manner and exhibits endonuclease activity. Probably involved in DNA repair. Involved in RNA-directed DNA methylation (RdDM) as a component of the RdDM machinery and required for gene silencing. May also be involved in the regulation of chromatin architecture to maintain gene silencing. The sequence is that of Protein MICRORCHIDIA 3 from Arabidopsis thaliana (Mouse-ear cress).